Reading from the N-terminus, the 921-residue chain is TRPM8 channel-associated factor 1 (921 aa).

The region spanning 542–841 is the Peptidase M60 domain; sequence YCWMSTGLYI…TYLQLQEAFG (300 aa).

It belongs to the TCAF family. As to quaternary structure, interacts with TRPM8 (via N-terminus and C-terminus domains); the interaction inhibits TRPM8 channel activity. Interacts with TRPV6. As to expression, isoform 2 is expressed in the prostate and strongly expressed in cancerous prostate samples.

The protein localises to the cell membrane. Its function is as follows. Positively regulates the plasma membrane cation channel TRPM8 activity. Involved in the recruitment of TRPM8 to the cell surface. Promotes prostate cancer cell migration inhibition in a TRPM8-dependent manner. The protein is TRPM8 channel-associated factor 1 of Homo sapiens (Human).